We begin with the raw amino-acid sequence, 310 residues long: p-hydroxybenzoic acid efflux pump subunit AaeA (310 aa).

The helical transmembrane segment at 12-32 (AITVVLVILAFIAIFNAWVYY) threads the bilayer.

This sequence belongs to the membrane fusion protein (MFP) (TC 8.A.1) family.

The protein resides in the cell inner membrane. Functionally, forms an efflux pump with AaeB. The protein is p-hydroxybenzoic acid efflux pump subunit AaeA of Escherichia coli O127:H6 (strain E2348/69 / EPEC).